Reading from the N-terminus, the 1390-residue chain is DNA-directed RNA polymerase subunit beta (1390 aa).

Belongs to the RNA polymerase beta chain family. As to quaternary structure, the RNAP catalytic core consists of 2 alpha, 1 beta, 1 beta' and 1 omega subunit. When a sigma factor is associated with the core the holoenzyme is formed, which can initiate transcription.

It catalyses the reaction RNA(n) + a ribonucleoside 5'-triphosphate = RNA(n+1) + diphosphate. Functionally, DNA-dependent RNA polymerase catalyzes the transcription of DNA into RNA using the four ribonucleoside triphosphates as substrates. This Methylobacillus flagellatus (strain ATCC 51484 / DSM 6875 / VKM B-1610 / KT) protein is DNA-directed RNA polymerase subunit beta.